The sequence spans 347 residues: Violet-sensitive opsin (347 aa).

Topologically, residues 1-31 (MLEEEDFYLFKNVSNVSPFDGPQYHIAPKWA) are extracellular. A glycan (N-linked (GlcNAc...) asparagine) is linked at Asn12. The helical transmembrane segment at 32–56 (FTLQAIFMGMVFLIGTPLNFIVLLV) threads the bilayer. Residues 57–68 (TIKYKKLRQPLN) are Cytoplasmic-facing. A helical transmembrane segment spans residues 69–94 (YILVNITVGGFLMCIFSIFPVFVSSS). At 95–108 (QGYFFFGRIACSID) the chain is on the extracellular side. Residues Cys105 and Cys182 are joined by a disulfide bond. Residues 109–128 (AFVGTLTGLVTGWSLAFLAF) traverse the membrane as a helical segment. Topologically, residues 129-147 (ERYIVICKPMGNFNFSSSH) are cytoplasmic. A helical membrane pass occupies residues 148 to 171 (ALAVVICTWIIGIVVSVPPFLGWS). At 172 to 197 (RYMPEGLQCSCGPDWYTVGTKYRSEY) the chain is on the extracellular side. Residues 198-225 (YTWFIFIFCFVIPLSLICFSYGRLLGAL) form a helical membrane-spanning segment. The Cytoplasmic segment spans residues 226–247 (RAVAAQQQESASTQKAEREVSR). The helical transmembrane segment at 248–271 (MVIFMVGSFCLCYVPYAAMAMYMV) threads the bilayer. Topologically, residues 272–279 (TNRNHGLD) are extracellular. A helical membrane pass occupies residues 280–304 (LRLVTIPAFFSKSSCVYNPIIYSFM). Lys291 is subject to N6-(retinylidene)lysine. Topologically, residues 305-347 (NKQFRGCIMETVCGRPMSDDSSVSSTSQRTEVSTVSSSQVSPA) are cytoplasmic. Positions 323 to 347 (DDSSVSSTSQRTEVSTVSSSQVSPA) are disordered.

The protein belongs to the G-protein coupled receptor 1 family. Opsin subfamily. Post-translationally, phosphorylated on some or all of the serine and threonine residues present in the C-terminal region. As to expression, the color pigments are found in the cone photoreceptor cells.

Its subcellular location is the membrane. Its function is as follows. Visual pigments are the light-absorbing molecules that mediate vision. They consist of an apoprotein, opsin, covalently linked to cis-retinal. This Xenopus laevis (African clawed frog) protein is Violet-sensitive opsin.